We begin with the raw amino-acid sequence, 219 residues long: PKHD-type hydroxylase Plav_0037 (219 aa).

Positions 78–172 (NFIRILLSRY…RRAAVGWIRS (95 aa)) constitute a Fe2OG dioxygenase domain. The Fe cation site is built by histidine 96, aspartate 98, and histidine 153. Residue arginine 163 coordinates 2-oxoglutarate.

Fe(2+) serves as cofactor. L-ascorbate is required as a cofactor.

The chain is PKHD-type hydroxylase Plav_0037 from Parvibaculum lavamentivorans (strain DS-1 / DSM 13023 / NCIMB 13966).